The following is a 156-amino-acid chain: MKLQLIAVGTRMPDWVTRGFEEYQRRFPRDMALELIEIPAGKRGKNADIVRILQKEGEQMLAAIPKGNHIVSLDLPGKNWTTPELATALSKWQLDGRDVSLLVGGPEGLAPACKDAAHQSWCLSALTLPHPLVRIVVAESLYRAWSVNTNHPYHRE.

Residues Leu73, Gly104, and 123 to 128 (LSALTL) contribute to the S-adenosyl-L-methionine site.

The protein belongs to the RNA methyltransferase RlmH family. In terms of assembly, homodimer.

Its subcellular location is the cytoplasm. It carries out the reaction pseudouridine(1915) in 23S rRNA + S-adenosyl-L-methionine = N(3)-methylpseudouridine(1915) in 23S rRNA + S-adenosyl-L-homocysteine + H(+). Its function is as follows. Specifically methylates the pseudouridine at position 1915 (m3Psi1915) in 23S rRNA. The chain is Ribosomal RNA large subunit methyltransferase H from Shewanella putrefaciens (strain CN-32 / ATCC BAA-453).